Here is a 313-residue protein sequence, read N- to C-terminus: GTP cyclohydrolase MptA (313 aa).

This sequence belongs to the GTP cyclohydrolase IV family. As to quaternary structure, homodimer. Fe(2+) is required as a cofactor.

It catalyses the reaction GTP + H2O = 7,8-dihydroneopterin 2',3'-cyclic phosphate + formate + diphosphate + H(+). Its pathway is cofactor biosynthesis; 5,6,7,8-tetrahydromethanopterin biosynthesis. Functionally, converts GTP to 7,8-dihydro-D-neopterin 2',3'-cyclic phosphate, the first intermediate in the biosynthesis of coenzyme methanopterin. The protein is GTP cyclohydrolase MptA of Methanosphaera stadtmanae (strain ATCC 43021 / DSM 3091 / JCM 11832 / MCB-3).